Here is a 1147-residue protein sequence, read N- to C-terminus: MSLRFIYGRAGSGKSQYCLNSIKKRIEEDIDRPLILLVPEQFSFQAEKNLIEVLDEKTGFKTQVLSFKRMAYRVFNEVGGITAKHMNESGKSMLLYNIIEDNKNNLKVFKKAAKRQGFITTISDIITEFKRYNITPEIILNNLENIEEDNLKYKMEDLALIFSQFETRLHKNYIDNEDDLTILVEKLNKSKQFDNAEIWIDEFSSFSPQEYSVLEKLLLKSYRINITLCTDYLNQGRFVDTTDVFSPIKNTENKLLQIIEDNNIKLDKPIALNCDPCARFKNSIELQHLEKNMFSFPYKEYKNETKDICMLKTLNQFTEIENTAKDIIKLCRDKGCRFKDIAVITGDLEGYENIISSVFLQYNIPFFIDKKREINNNPIIVLILSALEVLSKNWTYESVFRYLKTGLLDINNEEMDILENYVLANGIKGYQWTNDKPWEHKSFSNYELEDQVEKELLAKINDIRYKAMEPIISLNKNLKNKERAKEFCEVLYEFLCSINLPDKIQNMIEDFRAEGEVEKASEYNQIWNIVMEVLDQIVEAIGGEKISLKEFFKILQTGFSEYEIGLIPPTLDQVIVGSITRLRSHNINILYIVGVNDGIFPAPLKEEGILSDDDRQFLGDKGLEIAKDTKSIAFEEQFLVYSTLTTPSKYLRLSYPIADGEGKTLRPSIIISRIKKIFTNICEENDIVKLNGEEEELKNISSAKPTFNYLISNLRKDIEGVKIDNIWGDIYKWYFENEFWIEKLNRLVKGFDYTNQSKYIETKKIRNLYGKPLKISVSRVEKFSQCPFAYFVQYGLKAKDRKIFNLSYPDLGIFMHSILEKFSHELEKKGIDWDTMDLNWAEEEIDKLINEELDNKSLDILNSSKRYEYVTKSVKKILKRSIWLIGEHIKRGNFKPSYYELSFDIDGDYPPIAMELHSGEVVNLIGRVDRVDLLQKDGATYLKIIDYKSGTKEFKLSDVYYGLQLQLLIYLDAILTELAERFGIDGEPGALLYLKLDDPIVKNIVDMSDKEIEKSIIKNLKMKGLILNDPNIIKDMDNIISGISDIIPVMVKKDGGVSEGRSSVATKEEFETLRKYVRYTIIEICEEMLEGNIEIKPYKKKDGSSCDYCIYSSVCKFDTEIRGNKYNILIDKKDEEVWEAIKKKLEC.

Residue G8–S15 participates in ATP binding. Residues C786, C1106, C1109, and C1115 each coordinate [4Fe-4S] cluster.

The protein belongs to the helicase family. AddB/RexB type 1 subfamily. In terms of assembly, heterodimer of AddA and AddB. Mg(2+) serves as cofactor. The cofactor is [4Fe-4S] cluster.

The heterodimer acts as both an ATP-dependent DNA helicase and an ATP-dependent, dual-direction single-stranded exonuclease. Recognizes the chi site generating a DNA molecule suitable for the initiation of homologous recombination. The AddB subunit has 5' -&gt; 3' nuclease activity but not helicase activity. The polypeptide is ATP-dependent helicase/deoxyribonuclease subunit B (Clostridium botulinum (strain Loch Maree / Type A3)).